A 158-amino-acid polypeptide reads, in one-letter code: Vasotocin-neurophysin VT 2 (158 aa).

Positions 1-19 are cleaved as a signal peptide; it reads MPHSTLLLCVIGLLAFSSA. C20 and C25 are oxidised to a cystine. The residue at position 28 (G28) is a Glycine amide. Intrachain disulfides connect C41/C85, C44/C58, C52/C75, C59/C65, C92/C105, C99/C117, and C106/C111.

Belongs to the vasopressin/oxytocin family. In terms of processing, seven disulfide bonds are present in neurophysin.

It is found in the secreted. In terms of biological role, vasotocin is an antidiuretic hormone. This is Vasotocin-neurophysin VT 2 from Oncorhynchus keta (Chum salmon).